We begin with the raw amino-acid sequence, 193 residues long: Cysteine and glycine-rich protein 2 (193 aa).

Positions 10 to 61 constitute an LIM zinc-binding 1 domain; it reads CGACGRTVYHAEEVQCDGRSFHRCCFLCMVCRKNLDSTTVAIHDEEIYCKSC. The Nuclear localization signal signature appears at 64 to 69; it reads KKYGPK. Lys91 is covalently cross-linked (Glycyl lysine isopeptide (Lys-Gly) (interchain with G-Cter in SUMO2)). 2 positions are modified to N6-acetyllysine: Lys112 and Lys131. The LIM zinc-binding 2 domain occupies 119–170; the sequence is CSRCGDSVYAAEKIIGAGKPWHKNCFRCAKCGKSLESTTLTEKEGEIYCKGC. Lys137 is subject to N6-acetyllysine; alternate. The residue at position 137 (Lys137) is an N6-succinyllysine; alternate. Lys161 is modified (N6-acetyllysine).

As to quaternary structure, interacts with KAT14. The LIM domain 1 is necessary and sufficient for this interaction. Interacts with GLRX3.

The protein localises to the nucleus. Functionally, drastically down-regulated in response to PDGF-BB or cell injury, that promote smooth muscle cell proliferation and dedifferentiation. Seems to play a role in the development of the embryonic vascular system. In Mus musculus (Mouse), this protein is Cysteine and glycine-rich protein 2 (Csrp2).